Reading from the N-terminus, the 301-residue chain is D-alanine--D-alanine ligase (301 aa).

Residues 99 to 293 (KRILAFGNVR…FEELLDTIIE (195 aa)) form the ATP-grasp domain. 126–181 (IENLGYPVFIKPNNGGSSVATTLVESKEAVKDAVLEALKYDTEVMIEEYIKGDEIT) is a binding site for ATP. Residues D248, E260, and N262 each contribute to the Mg(2+) site.

The protein belongs to the D-alanine--D-alanine ligase family. Mg(2+) serves as cofactor. The cofactor is Mn(2+).

The protein resides in the cytoplasm. The enzyme catalyses 2 D-alanine + ATP = D-alanyl-D-alanine + ADP + phosphate + H(+). Its pathway is cell wall biogenesis; peptidoglycan biosynthesis. In terms of biological role, cell wall formation. The chain is D-alanine--D-alanine ligase from Clostridium perfringens (strain SM101 / Type A).